The primary structure comprises 618 residues: Protein fem-1 homolog C (618 aa).

ANK repeat units lie at residues Asp2–Val31, Asn40–Leu70, Glu82–Asn111, Thr115–Val144, His148–Arg177, Lys181–Lys210, and Tyr213–Glu243. TPR repeat units lie at residues Ile245 to Glu279 and Ser337 to Asn370. ANK repeat units follow at residues Asn482–Ser524 and Asp528–Ser557.

The protein belongs to the fem-1 family. In terms of assembly, component of a CRL2 E3 ubiquitin-protein ligase complex, also named ECS (Elongin BC-CUL2/5-SOCS-box protein) complex.

Its pathway is protein modification; protein ubiquitination. Substrate-recognition component of a Cul2-RING (CRL2) E3 ubiquitin-protein ligase complex of the DesCEND (destruction via C-end degrons) pathway, which recognizes a C-degron located at the extreme C terminus of target proteins, leading to their ubiquitination and degradation. The C-degron recognized by the DesCEND pathway is usually a motif of less than ten residues and can be present in full-length proteins, truncated proteins or proteolytically cleaved forms. The CRL2(FEM1C) complex specifically recognizes proteins with an arginine at the C-terminus: recognizes and binds proteins ending with -Lys/Arg-Xaa-Arg and -Lys/Arg-Xaa-Xaa-Arg C-degrons, leading to their ubiquitination and degradation. This is Protein fem-1 homolog C from Danio rerio (Zebrafish).